A 440-amino-acid polypeptide reads, in one-letter code: Methylthioribose-1-phosphate isomerase (440 aa).

Asp-285 functions as the Proton donor in the catalytic mechanism.

Belongs to the eIF-2B alpha/beta/delta subunits family. MtnA subfamily.

The protein resides in the cytoplasm. Its subcellular location is the nucleus. It catalyses the reaction 5-(methylsulfanyl)-alpha-D-ribose 1-phosphate = 5-(methylsulfanyl)-D-ribulose 1-phosphate. The protein operates within amino-acid biosynthesis; L-methionine biosynthesis via salvage pathway; L-methionine from S-methyl-5-thio-alpha-D-ribose 1-phosphate: step 1/6. Catalyzes the interconversion of methylthioribose-1-phosphate (MTR-1-P) into methylthioribulose-1-phosphate (MTRu-1-P). This Botryotinia fuckeliana (strain B05.10) (Noble rot fungus) protein is Methylthioribose-1-phosphate isomerase (mri1).